Here is a 692-residue protein sequence, read N- to C-terminus: Elongation factor G (692 aa).

The region spanning 8–283 (EDYRNFGIMA…AVVDYLPSPL (276 aa)) is the tr-type G domain. GTP contacts are provided by residues 17 to 24 (AHIDAGKT), 81 to 85 (DTPGH), and 135 to 138 (NKMD).

This sequence belongs to the TRAFAC class translation factor GTPase superfamily. Classic translation factor GTPase family. EF-G/EF-2 subfamily.

It is found in the cytoplasm. Its function is as follows. Catalyzes the GTP-dependent ribosomal translocation step during translation elongation. During this step, the ribosome changes from the pre-translocational (PRE) to the post-translocational (POST) state as the newly formed A-site-bound peptidyl-tRNA and P-site-bound deacylated tRNA move to the P and E sites, respectively. Catalyzes the coordinated movement of the two tRNA molecules, the mRNA and conformational changes in the ribosome. The protein is Elongation factor G of Caulobacter sp. (strain K31).